The primary structure comprises 297 residues: Aspartate carbamoyltransferase catalytic subunit (297 aa).

The carbamoyl phosphate site is built by R49 and T50. K77 contributes to the L-aspartate binding site. Residues R99, H129, and Q132 each coordinate carbamoyl phosphate. L-aspartate is bound by residues R162 and R215. Positions 256 and 257 each coordinate carbamoyl phosphate.

The protein belongs to the aspartate/ornithine carbamoyltransferase superfamily. ATCase family. As to quaternary structure, heterododecamer (2C3:3R2) of six catalytic PyrB chains organized as two trimers (C3), and six regulatory PyrI chains organized as three dimers (R2).

The catalysed reaction is carbamoyl phosphate + L-aspartate = N-carbamoyl-L-aspartate + phosphate + H(+). It functions in the pathway pyrimidine metabolism; UMP biosynthesis via de novo pathway; (S)-dihydroorotate from bicarbonate: step 2/3. Functionally, catalyzes the condensation of carbamoyl phosphate and aspartate to form carbamoyl aspartate and inorganic phosphate, the committed step in the de novo pyrimidine nucleotide biosynthesis pathway. This Legionella pneumophila (strain Lens) protein is Aspartate carbamoyltransferase catalytic subunit.